A 290-amino-acid polypeptide reads, in one-letter code: Ribosomal RNA small subunit methyltransferase A (290 aa).

S-adenosyl-L-methionine is bound by residues N27, L29, G54, E75, D100, and N125.

This sequence belongs to the class I-like SAM-binding methyltransferase superfamily. rRNA adenine N(6)-methyltransferase family. RsmA subfamily.

The protein resides in the cytoplasm. It catalyses the reaction adenosine(1518)/adenosine(1519) in 16S rRNA + 4 S-adenosyl-L-methionine = N(6)-dimethyladenosine(1518)/N(6)-dimethyladenosine(1519) in 16S rRNA + 4 S-adenosyl-L-homocysteine + 4 H(+). In terms of biological role, specifically dimethylates two adjacent adenosines (A1518 and A1519) in the loop of a conserved hairpin near the 3'-end of 16S rRNA in the 30S particle. May play a critical role in biogenesis of 30S subunits. This Streptococcus equi subsp. zooepidemicus (strain H70) protein is Ribosomal RNA small subunit methyltransferase A.